Reading from the N-terminus, the 430-residue chain is Phosphomethylpyrimidine synthase 2 (430 aa).

Residues Asn-66, Met-95, Tyr-124, His-164, 186–188 (SRG), 227–230 (DGFR), and Glu-266 contribute to the substrate site. His-270 contributes to the Zn(2+) binding site. Tyr-293 contacts substrate. A Zn(2+)-binding site is contributed by His-334. The [4Fe-4S] cluster site is built by Cys-411, Cys-414, and Cys-418.

Belongs to the ThiC family. In terms of assembly, homodimer. The cofactor is [4Fe-4S] cluster.

It catalyses the reaction 5-amino-1-(5-phospho-beta-D-ribosyl)imidazole + S-adenosyl-L-methionine = 4-amino-2-methyl-5-(phosphooxymethyl)pyrimidine + CO + 5'-deoxyadenosine + formate + L-methionine + 3 H(+). The protein operates within cofactor biosynthesis; thiamine diphosphate biosynthesis. Catalyzes the synthesis of the hydroxymethylpyrimidine phosphate (HMP-P) moiety of thiamine from aminoimidazole ribotide (AIR) in a radical S-adenosyl-L-methionine (SAM)-dependent reaction. The sequence is that of Phosphomethylpyrimidine synthase 2 from Syntrophotalea carbinolica (strain DSM 2380 / NBRC 103641 / GraBd1) (Pelobacter carbinolicus).